Reading from the N-terminus, the 147-residue chain is Nucleoside diphosphate kinase (147 aa).

5 residues coordinate ATP: K9, R85, T91, R102, and N112. H115 serves as the catalytic Pros-phosphohistidine intermediate.

This sequence belongs to the NDK family. The cofactor is Mg(2+).

The catalysed reaction is a 2'-deoxyribonucleoside 5'-diphosphate + ATP = a 2'-deoxyribonucleoside 5'-triphosphate + ADP. It catalyses the reaction a ribonucleoside 5'-diphosphate + ATP = a ribonucleoside 5'-triphosphate + ADP. Major role in the synthesis of nucleoside triphosphates other than ATP. The ATP gamma phosphate is transferred to the NDP beta phosphate via a ping-pong mechanism, using a phosphorylated active-site intermediate. The polypeptide is Nucleoside diphosphate kinase (NDK1) (Encephalitozoon cuniculi (strain GB-M1) (Microsporidian parasite)).